Reading from the N-terminus, the 302-residue chain is ICOS ligand (302 aa).

Residues 1 to 18 form the signal peptide; the sequence is MRLGSPGLLFLLFSSLRA. Residues 19-129 form the Ig-like V-type domain; the sequence is DTQEKEVRAM…LGFQEVLSVE (111 aa). The Extracellular segment spans residues 19–256; it reads DTQEKEVRAM…VSTGEKNAAT (238 aa). Cysteines 37 and 113 form a disulfide. Asparagine 70, asparagine 137, asparagine 173, asparagine 186, and asparagine 225 each carry an N-linked (GlcNAc...) asparagine glycan. In terms of domain architecture, Ig-like C2-type spans 141–227; sequence PVVSAPHSPS…ENVLLQQNLT (87 aa). Cysteine 158 and cysteine 216 are disulfide-bonded. A helical membrane pass occupies residues 257–277; that stretch reads WSILAVLCLLVVVAVAIGWVC. The Cytoplasmic segment spans residues 278 to 302; sequence RDRCLQHSYAGAWAVSPETELTGHV.

The protein belongs to the immunoglobulin superfamily. BTN/MOG family. In terms of assembly, interacts with CTLA4 (in vitro). Expressed on peripheral blood B-cells and monocytes, as well as on monocyte-derived dendritic cells (at protein level). In terms of tissue distribution, widely expressed (brain, heart, kidney, liver, lung, pancreas, placenta, skeletal muscle, bone marrow, colon, ovary, prostate, testis, lymph nodes, leukocytes, spleen, thymus and tonsil). As to expression, detected only in lymph nodes, leukocytes and spleen. Expressed on activated monocytes and dendritic cells.

The protein localises to the cell membrane. Its function is as follows. Ligand for the T-cell-specific cell surface receptor ICOS. Acts as a costimulatory signal for T-cell proliferation and cytokine secretion. Also induces B-cell proliferation and differentiation into plasma cells. Could play an important role in mediating local tissue responses to inflammatory conditions, as well as in modulating the secondary immune response by co-stimulating memory T-cell function. In endothelial cells, required for proper neutrophil transmigration in response to chemoattractants, such as CXCL8/IL8 or N-formyl-methionyl peptides (fMLP). This chain is ICOS ligand (ICOSLG), found in Homo sapiens (Human).